The sequence spans 266 residues: Uracil-DNA glycosylase (266 aa).

The disordered stretch occupies residues 1–25 (MTRRADPAQATLFDDDEPAGAPTAT). The Proton acceptor role is filled by aspartate 97.

The protein belongs to the uracil-DNA glycosylase (UDG) superfamily. UNG family.

It localises to the cytoplasm. The enzyme catalyses Hydrolyzes single-stranded DNA or mismatched double-stranded DNA and polynucleotides, releasing free uracil.. Its function is as follows. Excises uracil residues from the DNA which can arise as a result of misincorporation of dUMP residues by DNA polymerase or due to deamination of cytosine. This is Uracil-DNA glycosylase from Ralstonia nicotianae (strain ATCC BAA-1114 / GMI1000) (Ralstonia solanacearum).